The chain runs to 665 residues: Golgi-associated RAB2B interactor protein 3 (665 aa).

Disordered regions lie at residues 211–240, 272–296, and 480–590; these read EIRGEGDQNSRPQSSPTVSEATSAAFAGGE, AAAGTAGPAAGPAAGTAGPAAGTAG, and SEGY…GSVS. Polar residues predominate over residues 219-232; the sequence is NSRPQSSPTVSEAT. Over residues 499-513 the composition is skewed to basic and acidic residues; that stretch reads EAKEKRERREKDRTS. 2 stretches are compositionally biased toward basic residues: residues 514–538 and 554–566; these read SRKSSHHRRTGMSRHSSKDKSRKTS and GHGRLRGKRHSSS. The short motif at 515-531 is the Bipartite nuclear localization signal element; the sequence is RKSSHHRRTGMSRHSSK. The residue at position 652 (S652) is a Phosphoserine.

It belongs to the GARIN family. In terms of assembly, interacts (via N-terminus) with RAB2B (in GTP-bound form). Interacts with FRG1. Expressed in adult spermatocytes and spermatids.

It is found in the golgi apparatus. Its subcellular location is the nucleus. The protein localises to the cajal body. In terms of biological role, may be involved in RNA biogenesis. This is Golgi-associated RAB2B interactor protein 3 from Mus musculus (Mouse).